We begin with the raw amino-acid sequence, 258 residues long: Serine/arginine-rich splicing factor x16 (258 aa).

The region spanning 8-81 is the RRM domain; that stretch reads RKVYVGDLGN…RRARVELSTG (74 aa). Disordered stretches follow at residues 81–113 and 130–258; these read GKYARSGGGGGGGGGGGGGGGLGGRDRGGGGRG and CRER…VSRD. Over residues 86-103 the composition is skewed to gly residues; sequence SGGGGGGGGGGGGGGGLG. Positions 104–113 are enriched in basic and acidic residues; it reads GRDRGGGGRG. A CCHC-type zinc finger spans residues 116 to 132; sequence KCYECGGRGHFARHCRE. Composition is skewed to basic residues over residues 130–141 and 149–166; these read CRERKARQRRRS and STSRRRRTRSKSGTRSRS. Basic and acidic residues-rich tracts occupy residues 180-197 and 210-221; these read NGRDENGSASRYSDHERN and RRYEDEDDDRVR. Low complexity-rich tracts occupy residues 231-240 and 249-258; these read RSASPAVRRG and SSASRSVSRD.

As to quaternary structure, interacts (via Arg/Ser-rich region) with Alsin2/CG7564, Rbp1 and Doa (via N-terminus). Post-translationally, highly phosphorylated. May be phosphorylated by the serine/threonine-protein kinase Doa.

It is found in the nucleus. Functionally, serine/arginine-rich splicing factor (SR protein) involved in differential exon usage during RNA transcript processing, probably by binding exonic splicing enhancer elements and recruiting components of the splicing machinery. Binds RNA stem-loop structures with consensus sequence 5'-CCGUNUNKNW-3'. Regulator of genes involved in lipid and carbohydrate metabolism, the immune response and the response to xenobiotics. The polypeptide is Serine/arginine-rich splicing factor x16 (Drosophila melanogaster (Fruit fly)).